A 478-amino-acid chain; its full sequence is Solute carrier family 7 member 13 (478 aa).

The Cytoplasmic segment spans residues 1–14 (MAMDSKKEIRLKRE). A helical membrane pass occupies residues 15-35 (LGYFWGTNFLIINIIGAGIFV). Residues 36-47 (SPKGVLQHSSMN) are Extracellular-facing. Residues 48–68 (VGVSLCVWAVCAVLTLTSALC) form a helical membrane-spanning segment. The Cytoplasmic segment spans residues 69–89 (SAEIGITFPYSGAHYYFLKRC). The helical transmembrane segment at 90–110 (FGPLVAFLRLWTSLFLGPGLI) threads the bilayer. The Extracellular segment spans residues 111-129 (ASQALLLAEYGVQPFYPSC). A helical transmembrane segment spans residues 130–150 (SAPILPRKCLALAMLWIVGIL). The Cytoplasmic portion of the chain corresponds to 151-163 (NSRGVKELSWLQT). The helical transmembrane segment at 164-184 (VSSVLKVGILGVISLSGLFLL) threads the bilayer. The Extracellular portion of the chain corresponds to 185–208 (VRGKKENVQRLQNAFDAEFPEVSQ). A helical transmembrane segment spans residues 209–229 (LIEAIFQGYFAFSGGGCFTCI). The Cytoplasmic portion of the chain corresponds to 230-242 (AGELKKPSKTIPR). Residues 243 to 263 (CIFTGLPLVTVVYLLANISYL) form a helical membrane-spanning segment. The Extracellular segment spans residues 264–288 (TVLTPQEMLSSDAVALTWTDRVIPQ). The chain crosses the membrane as a helical span at residues 289-309 (FTWTVPFAISASLFINLVINV). The Cytoplasmic portion of the chain corresponds to 310 to 338 (LETSRVLYIASENGQLPLLFCALNVHSSP). A helical membrane pass occupies residues 339-359 (FIAVLLIISMASILIVLTNLI). Asp-360 is a topological domain (extracellular). The chain crosses the membrane as a helical span at residues 361–381 (LINYLYFVVSIWTALSIIGIL). Over 382-395 (KLRYQEPNLHRPYK) the chain is Cytoplasmic. The chain crosses the membrane as a helical span at residues 396 to 416 (VFLPFTFIALGITLSLVLIPL). The Extracellular portion of the chain corresponds to 417 to 423 (VKSPKLH). The helical transmembrane segment at 424-444 (YIYVFLFLLSGLVFYVPLIHF) threads the bilayer. The Cytoplasmic portion of the chain corresponds to 445–478 (KVKFVWFQKLTCYLQLLFNICIPDVSDDHIHEES).

This sequence belongs to the amino acid-polyamine-organocation (APC) superfamily. Disulfide-linked heterodimer composed of the catalytic light subunit SLC7A13 and the heavy subunit SLC3A1. In terms of tissue distribution, expressed in renal tubules in the outer stripe of the outer medulla and medullary ray (at protein level). Detected in male but not in female kidney.

The protein localises to the apical cell membrane. It catalyses the reaction L-cystine(out) + L-aspartate(in) = L-cystine(in) + L-aspartate(out). The catalysed reaction is L-cystine(out) = L-cystine(in). It carries out the reaction L-aspartate(in) + L-glutamate(out) = L-aspartate(out) + L-glutamate(in). The enzyme catalyses L-aspartate(in) + L-glutamine(out) = L-aspartate(out) + L-glutamine(in). It catalyses the reaction L-aspartate(in) + L-methionine(out) = L-aspartate(out) + L-methionine(in). The catalysed reaction is L-leucine(out) + L-aspartate(in) = L-leucine(in) + L-aspartate(out). It carries out the reaction L-valine(out) + L-aspartate(in) = L-valine(in) + L-aspartate(out). The enzyme catalyses L-aspartate(in) + L-phenylalanine(out) = L-aspartate(out) + L-phenylalanine(in). It catalyses the reaction L-tyrosine(out) + L-aspartate(in) = L-tyrosine(in) + L-aspartate(out). The catalysed reaction is L-tryptophan(out) + L-aspartate(in) = L-tryptophan(in) + L-aspartate(out). In terms of biological role, associates with SLC3A1/rBAT to form a functional heterodimeric complex that transports anionic and neutral amino acids across the apical plasma membrane of renal epithelium. Preferentially mediates exchange transport, but can also operate via facilitated diffusion. May act as a major transporter for L-cystine in late proximal tubules, ensuring its reabsorption from the luminal fluid in exchange for cytosolic L-glutamate or L-aspartate. The sequence is that of Solute carrier family 7 member 13 from Mus musculus (Mouse).